Reading from the N-terminus, the 363-residue chain is Phospho-N-acetylmuramoyl-pentapeptide-transferase (363 aa).

A run of 9 helical transmembrane segments spans residues 13 to 33, 49 to 69, 95 to 115, 119 to 139, 154 to 174, 183 to 203, 224 to 244, 281 to 301, and 343 to 363; these read ISGI…AFFL, LPLL…IPLL, MGGI…SNFA, LAVS…DWQI, LALQ…NQPS, WVSF…FVLV, AIAL…LMVF, AVAL…IFFV, and ELQV…ICLA.

The protein belongs to the glycosyltransferase 4 family. MraY subfamily. The cofactor is Mg(2+).

The protein resides in the cell inner membrane. It catalyses the reaction UDP-N-acetyl-alpha-D-muramoyl-L-alanyl-gamma-D-glutamyl-meso-2,6-diaminopimeloyl-D-alanyl-D-alanine + di-trans,octa-cis-undecaprenyl phosphate = di-trans,octa-cis-undecaprenyl diphospho-N-acetyl-alpha-D-muramoyl-L-alanyl-D-glutamyl-meso-2,6-diaminopimeloyl-D-alanyl-D-alanine + UMP. It functions in the pathway cell wall biogenesis; peptidoglycan biosynthesis. Functionally, catalyzes the initial step of the lipid cycle reactions in the biosynthesis of the cell wall peptidoglycan: transfers peptidoglycan precursor phospho-MurNAc-pentapeptide from UDP-MurNAc-pentapeptide onto the lipid carrier undecaprenyl phosphate, yielding undecaprenyl-pyrophosphoryl-MurNAc-pentapeptide, known as lipid I. This is Phospho-N-acetylmuramoyl-pentapeptide-transferase from Nostoc punctiforme (strain ATCC 29133 / PCC 73102).